Consider the following 116-residue polypeptide: MNPGGGLDMQAILQQAQQMQQQLMAAQQELDETKVTGSSGGGLVSVTMNGRGQVEDVSIDPKAVDPDDAAETAQTIADLVLAAIRDGERMVEEIQQQKMGPLAQGLGGGFPGLPGL.

It belongs to the YbaB/EbfC family. In terms of assembly, homodimer.

The protein resides in the cytoplasm. It is found in the nucleoid. Binds to DNA and alters its conformation. May be involved in regulation of gene expression, nucleoid organization and DNA protection. In Thermobifida fusca (strain YX), this protein is Nucleoid-associated protein Tfu_0045.